The sequence spans 367 residues: DNA replication and repair protein RecF (367 aa).

31-38 (GENGSGKT) contributes to the ATP binding site.

This sequence belongs to the RecF family.

The protein resides in the cytoplasm. The RecF protein is involved in DNA metabolism; it is required for DNA replication and normal SOS inducibility. RecF binds preferentially to single-stranded, linear DNA. It also seems to bind ATP. This chain is DNA replication and repair protein RecF, found in Saccharophagus degradans (strain 2-40 / ATCC 43961 / DSM 17024).